The chain runs to 168 residues: ADP-ribosylation factor-like protein 2-binding protein (168 aa).

Belongs to the ARL2BP family.

Its subcellular location is the cytoplasm. The protein resides in the mitochondrion intermembrane space. It localises to the cytoskeleton. It is found in the microtubule organizing center. The protein localises to the centrosome. Its subcellular location is the nucleus. The protein resides in the spindle. It localises to the cilium basal body. Its function is as follows. Plays a role as an effector of the ADP-ribosylation factor-like protein 2, ARL2. This chain is ADP-ribosylation factor-like protein 2-binding protein (arl2bp), found in Danio rerio (Zebrafish).